The following is a 387-amino-acid chain: Chromatin modification-related protein EAF3 (387 aa).

The interval 52–96 (NTHKRKRGPRASLPAAGATPDGDDSNDKNRHFSPKEGKPDVPADL) is disordered. Positions 76 to 92 (SNDKNRHFSPKEGKPDV) are enriched in basic and acidic residues. The 27-residue stretch at 100–126 (NEDKICYYVHYKGWKNTWDEWVGEERV) folds into the Tudor-knot domain. Residues 159–197 (PPEALSETASPAPTTKRKSMASKDSPAEGPRPVKRRGGL) are disordered. The MRG domain maps to 211-385 (KRKEIALVVP…ASPAYEALSK (175 aa)).

The protein belongs to the MRG family. Component of the NuA4 histone acetyltransferase complex.

Its subcellular location is the nucleus. In terms of biological role, involved in deacetylation of histones, chromatin assembly and chromosome segregation. May act as a transcriptional oscillator, directing histone deacetylases to specific chromosomal domains. Component of the NuA4 histone acetyltransferase complex which is involved in transcriptional activation of selected genes principally by acetylation of nucleosomal histone H4 and H2A. The NuA4 complex is also involved in DNA repair. This chain is Chromatin modification-related protein EAF3 (EAF3), found in Yarrowia lipolytica (strain CLIB 122 / E 150) (Yeast).